A 314-amino-acid polypeptide reads, in one-letter code: GTPase-interacting component 1 (314 aa).

Disordered stretches follow at residues 112-156 (SRRH…KHDV), 199-221 (TMDSHHDGNETNNTPNGNKQLDS), and 241-261 (LGDSVSEKTNPSSPSVSSFSG). The CRIB domain maps to 126–139 (ISTPFDFHHISHAN). Positions 140–156 (GKREDNPLESHEEKHDV) are enriched in basic and acidic residues. The span at 208–221 (ETNNTPNGNKQLDS) shows a compositional bias: polar residues. The segment covering 251-260 (PSSPSVSSFS) has biased composition (low complexity).

It belongs to the BORG/CEP family. In terms of assembly, interacts with GTP-bound CDC42.

The protein localises to the bud neck. It localises to the bud tip. Its subcellular location is the cytoplasm. The protein resides in the cell cortex. It is found in the cytoskeleton. In terms of biological role, required for cell size and shape control, bud site selection, bud emergence, actin cytoskeletal organization, mitotic spindle orientation/positioning, and mating projection formation in response to mating pheromone. This chain is GTPase-interacting component 1 (GIC1), found in Saccharomyces cerevisiae (strain ATCC 204508 / S288c) (Baker's yeast).